Consider the following 21-residue polypeptide: Complement receptor 3-related protein (21 aa).

It is found in the secreted. Plays a role in adherence of C.albicans to buccal epithelial cells, and in biofilm formation. This is Complement receptor 3-related protein from Candida albicans (Yeast).